Consider the following 365-residue polypeptide: Putative fatty acid elongase 2 (365 aa).

The Lumenal segment spans residues 1 to 68 (MPDSPTLHHN…SFEFIVNKTR (68 aa)). Asn17 and Asn65 each carry an N-linked (GlcNAc...) asparagine glycan. The helical transmembrane segment at 69 to 89 (FSSAPVVATIIISYYLLILVG) threads the bilayer. Residues 90–111 (GRIMRNRQPIRLQKIFQYYNLT) lie on the Cytoplasmic side of the membrane. A helical transmembrane segment spans residues 112–132 (FSIASAILALLIFEQVAPAIY). Over 133–149 (KHGFFFSICNEKAWTQP) the chain is Lumenal. A helical membrane pass occupies residues 150-170 (LVFLYYCAYISKFLELTDTFF). Topologically, residues 171–179 (LVLRKKPLQ) are cytoplasmic. The helical transmembrane segment at 180–198 (FLHCYHHGATAVLVYTQIV) threads the bilayer. Residues 199-204 (GRTSIS) are Lumenal-facing. Residues 205 to 225 (WLIIEINLLVHVTMYYYYYLV) form a helical membrane-spanning segment. At 226 to 241 (AKGIRVPWKKWVTRFQ) the chain is on the cytoplasmic side. A helical membrane pass occupies residues 242 to 262 (IVQFFADLGFIYFAVYTEVAY). Residues 263-278 (RLKFYKACMGHCSGHP) are Lumenal-facing. The chain crosses the membrane as a helical span at residues 279–299 (LAAFCGLATISSYLVLFIVFY). The Cytoplasmic portion of the chain corresponds to 300 to 365 (HNTYKKNAAL…PISSGLNNEK (66 aa)).

This sequence belongs to the ELO family.

The protein localises to the endoplasmic reticulum membrane. The enzyme catalyses a very-long-chain acyl-CoA + malonyl-CoA + H(+) = a very-long-chain 3-oxoacyl-CoA + CO2 + CoA. In terms of biological role, may be involved in the synthesis of very long chain fatty acids. This chain is Putative fatty acid elongase 2, found in Schizosaccharomyces pombe (strain 972 / ATCC 24843) (Fission yeast).